A 473-amino-acid polypeptide reads, in one-letter code: Glucose facilitated diffusion protein (473 aa).

Residues 1-13 (MSSESSQGLVTRL) lie on the Cytoplasmic side of the membrane. The helical transmembrane segment at 14–34 (ALIAAIGGLLFGYDSAVIAAI) threads the bilayer. Topologically, residues 35 to 59 (GTPVDIHFIAPRHLSATAAASLSGM) are periplasmic. The chain crosses the membrane as a helical span at residues 60-80 (VVVAVLVGCVTGSLLSGWIGI). The Cytoplasmic segment spans residues 81 to 85 (RFGRR). A helical transmembrane segment spans residues 86-106 (GGLLMSSICFVAAGFGAALTE). Over 107 to 112 (KLFGTG) the chain is Periplasmic. Residues 113–133 (GSALQIFCFFRFLAGLGIGVV) form a helical membrane-spanning segment. At 134-158 (STLTPTYIAEIAPPDKRGQMVSGQQ) the chain is on the cytoplasmic side. The helical transmembrane segment at 159 to 179 (MAIVTGALTGYIFTWLLAHFG) threads the bilayer. Over 180 to 187 (SIDWVNAS) the chain is Periplasmic. A helical transmembrane segment spans residues 188–208 (GWCWSPASEGLIGIAFLLLLL). Over 209–257 (TAPDTPHWLVMKGRHSEASKILARLEPQADPNLTIQKIKAGFDKAMDKS) the chain is Cytoplasmic. A helical transmembrane segment spans residues 258-278 (SAGLFAFGITVVFAGVSVAAF). The Periplasmic portion of the chain corresponds to 279 to 303 (QQLVGINAVLYYAPQMFQNLGFGAD). The chain crosses the membrane as a helical span at residues 304–324 (TALLQTISIGVVNFIFTMIAS). The Cytoplasmic portion of the chain corresponds to 325–335 (RVVDRFGRKPL). The helical transmembrane segment at 336–356 (LIWGALGMAAMMAVLGCCFWF) threads the bilayer. The Periplasmic segment spans residues 357-366 (KVGGVLPLAS). Residues 367 to 387 (VLLYIAVFGMSWGPVCWVVLS) form a helical membrane-spanning segment. Residues 388–396 (EMFPSSIKG) are Cytoplasmic-facing. The helical transmembrane segment at 397–417 (AAMPIAVTGQWLANILVNFLF) threads the bilayer. Topologically, residues 418–429 (KVADGSPALNQT) are periplasmic. The chain crosses the membrane as a helical span at residues 430–450 (FNHGFSYLVFAALSILGGLIV). Topologically, residues 451 to 473 (ARFVPETKGRSLDEIEEMWRSQK) are cytoplasmic.

This sequence belongs to the major facilitator superfamily. Sugar transporter (TC 2.A.1.1) family.

The protein resides in the cell inner membrane. In terms of biological role, allows uptake of glucose by the cell; allows growth on glucose minimal medium by E.coli cells impaired in glucose transport. Also transports fructose, but has a strong preference for glucose. The protein is Glucose facilitated diffusion protein of Zymomonas mobilis subsp. mobilis (strain ATCC 31821 / ZM4 / CP4).